A 772-amino-acid chain; its full sequence is Metabotropic glutamate receptor-like protein G (772 aa).

The first 23 residues, 1-23 (MKKIIFLVLFLIFIFKDIKSSYG), serve as a signal peptide directing secretion. At 24–391 (VDLVNFKMIT…TQVKFSPSIQ (368 aa)) the chain is on the extracellular side. 6 N-linked (GlcNAc...) asparagine glycosylation sites follow: N73, N126, N262, N313, N343, and N378. A helical transmembrane segment spans residues 392-412 (IGVSIVSGVLIAIVLLSMVGV). Residues 413–426 (YKYRASSSIRSASP) lie on the Cytoplasmic side of the membrane. Residues 427–447 (IFLIFILFGALIVFGGIILWV) form a helical membrane-spanning segment. Residues 448 to 463 (SELNDHVCNGRLWMVT) lie on the Extracellular side of the membrane. The chain crosses the membrane as a helical span at residues 464 to 484 (LGFSTLIGSLVVKNFRIWLIF). Residues 485–500 (DNPELKTVKITNYQLY) are Cytoplasmic-facing. Residues 501 to 521 (PWVACCLVINIILMSILTSLG) form a helical membrane-spanning segment. At 522-551 (DLREVDATGIDSLGKYEFLKICKMNNSGAS) the chain is on the extracellular side. N546 carries N-linked (GlcNAc...) asparagine glycosylation. Residues 552 to 572 (VLYTILAYFGALLLTGVFVSW) form a helical membrane-spanning segment. Residues 573–586 (KIRIVDIEEFNESR) are Cytoplasmic-facing. Residues 587 to 607 (AIAHTLYAISFCLFVIVPLMI) form a helical membrane-spanning segment. At 608 to 616 (SPLEKQSET) the chain is on the extracellular side. The helical transmembrane segment at 617-637 (IILSVAGLFITTAAVLIIFLP) threads the bilayer. The Cytoplasmic segment spans residues 638–772 (KFYRVYEYGE…QIEPDEKNQD (135 aa)). The segment at 664 to 772 (TARAESHKSS…QIEPDEKNQD (109 aa)) is disordered. Residues 718–728 (FTEESVSEIDE) are compositionally biased toward acidic residues. Residues 740-753 (PEINQSEQQNSEIE) are compositionally biased toward low complexity. Pro residues predominate over residues 754–763 (QPPPPPPPQQ).

The protein in the N-terminal section; belongs to the BMP lipoprotein family. In the C-terminal section; belongs to the G-protein coupled receptor 3 family. GABA-B receptor subfamily.

The protein resides in the membrane. The protein is Metabotropic glutamate receptor-like protein G (grlG) of Dictyostelium discoideum (Social amoeba).